Reading from the N-terminus, the 408-residue chain is MRRFNWVLRHVQARRTFDSAIGLRQGSQKPLFERYIHATGINNSSARNYYDVLGVSPKATREEIKKSFHELAKKFHPDTNRNNPSAKRKFQEIREAYETLGNSERREEYDKLQYRNSDYVNNDGGDSERFRRAYQSNFSDTFHKIFSEIFENNQIKPDIRVELSLSLSEAAEGCTKRLSFDAYVFCDSCDGLGHPSDAAMSICPTCRGVGRVTIPPFTASCQTCKGTGHIIKEYCMSCRGSGIVEGTKTAELVIPGGVESEATITIVGAGNVSSRTSQPGNLYIKLKVANDSTFTRDGSDIYVDANISFTQAILGGKVVVPTLSGKIQLDIPKGTQPDQLLVLRGKGLPKQGFFVDHGDQYVRFRVNFPTEVNERQRAILEEFAKEEINNELSDSAEGSWLYQKLSTG.

The transit peptide at 1–26 (MRRFNWVLRHVQARRTFDSAIGLRQG) directs the protein to the mitochondrion. In terms of domain architecture, J spans 48–113 (NYYDVLGVSP…ERREEYDKLQ (66 aa)). The CR-type zinc finger occupies 173-247 (GCTKRLSFDA…CRGSGIVEGT (75 aa)). Cysteine 186, cysteine 189, cysteine 203, cysteine 206, cysteine 221, cysteine 224, cysteine 235, and cysteine 238 together coordinate Zn(2+). CXXCXGXG motif repeat units lie at residues 186 to 193 (CDSCDGLG), 203 to 210 (CPTCRGVG), 221 to 228 (CQTCKGTG), and 235 to 242 (CMSCRGSG).

This sequence belongs to the DnaJ family. B/II subfamily. As to quaternary structure, homodimer. Requires Zn(2+) as cofactor. In terms of tissue distribution, ubiquitous.

The protein resides in the mitochondrion. Plays a continuous role in plant development probably in the structural organization of compartments. The sequence is that of Chaperone protein dnaJ 1, mitochondrial (ATJ1) from Arabidopsis thaliana (Mouse-ear cress).